The primary structure comprises 289 residues: Ribosomal protein L11 methyltransferase (289 aa).

S-adenosyl-L-methionine-binding residues include Thr-142, Gly-163, Asp-185, and Asn-226.

This sequence belongs to the methyltransferase superfamily. PrmA family.

It localises to the cytoplasm. It catalyses the reaction L-lysyl-[protein] + 3 S-adenosyl-L-methionine = N(6),N(6),N(6)-trimethyl-L-lysyl-[protein] + 3 S-adenosyl-L-homocysteine + 3 H(+). Methylates ribosomal protein L11. The sequence is that of Ribosomal protein L11 methyltransferase from Legionella pneumophila (strain Corby).